A 334-amino-acid polypeptide reads, in one-letter code: MTKVVVCALYKFVSLPHFESIRAPLLAMMEQAEVKGTLLLASEGINGTVAGNQEAIEALLAWLNNQNGLDNIVYKLSFDDEMPFYRTKVKLKNEIVTMGVEGIDPLKVVGTYVKPKDWNALISDPDVILVDTRNDYEVQIGTFKNAINPVTETFREFPEYVKQNLDPVKHKKVAMFCTGGIRCEKSTAYLKEQGFEEVYHLEGGILKYLEEVKQEESLWEGECFVFDNRVAVNHELKKGQYDQCNACRMPITEAEKRSPAYVQGVSCPHCVDKISDEQRKRFVERERQVNLAKARNEAHIGSDVNQVIEARREKKEALRKLAAQKNKLKQTGTV.

Positions 123–217 (SDPDVILVDT…YLEEVKQEES (95 aa)) constitute a Rhodanese domain. Catalysis depends on C177, which acts as the Cysteine persulfide intermediate.

It belongs to the TrhO family.

The catalysed reaction is uridine(34) in tRNA + AH2 + O2 = 5-hydroxyuridine(34) in tRNA + A + H2O. Functionally, catalyzes oxygen-dependent 5-hydroxyuridine (ho5U) modification at position 34 in tRNAs. The chain is tRNA uridine(34) hydroxylase from Shewanella putrefaciens (strain CN-32 / ATCC BAA-453).